Here is a 256-residue protein sequence, read N- to C-terminus: Isoprenyl transferase (256 aa).

D33 is an active-site residue. D33 is a Mg(2+) binding site. Substrate-binding positions include 34 to 37 (GNGR), W38, R46, H50, and 78 to 80 (STE). N81 (proton acceptor) is an active-site residue. Substrate contacts are provided by residues W82, R84, R201, and 207–209 (RIS). E220 is a binding site for Mg(2+).

It belongs to the UPP synthase family. In terms of assembly, homodimer. Requires Mg(2+) as cofactor.

Functionally, catalyzes the condensation of isopentenyl diphosphate (IPP) with allylic pyrophosphates generating different type of terpenoids. In Staphylococcus aureus (strain Mu50 / ATCC 700699), this protein is Isoprenyl transferase.